Here is a 473-residue protein sequence, read N- to C-terminus: Mitochondrial adenyl nucleotide antiporter SLC25A24-A (473 aa).

Positions 1 to 173 (MLEQVQKFLL…RFWKHSTVLD (173 aa)) are regulatory N-terminal domain. Topologically, residues 1-197 (MLEQVQKFLL…EKKTGQWWKH (197 aa)) are mitochondrial intermembrane. EF-hand domains follow at residues 19–54 (DSHT…MGMA), 55–88 (VGKG…EEHE), 86–121 (EHEK…LGIN), and 122–157 (ISLD…NPAD). Aspartate 32, asparagine 34, aspartate 36, lysine 38, glutamate 43, aspartate 68, asparagine 70, aspartate 72, histidine 74, glutamate 79, aspartate 99, asparagine 101, aspartate 103, lysine 105, glutamate 110, aspartate 135, aspartate 137, threonine 139, threonine 141, and glutamate 146 together coordinate Ca(2+). Positions 159–168 (IQQIIRFWKH) are linker region. The segment at 174–473 (IGDSLTIPDE…YEKMKIQLGI (300 aa)) is C-terminal transmembrane transporter domain. Solcar repeat units follow at residues 192 to 277 (GQWW…YKKL), 285 to 370 (LGTA…LKNY), and 382 to 470 (PGVL…MKIQ). The helical transmembrane segment at 198–215 (LLAGGMAGAVSRTGTAPL) threads the bilayer. Over 216 to 251 (DRLKVMMQVHGTKGNSNIITGLKQMVKEGGVRSLWR) the chain is Mitochondrial matrix. The chain crosses the membrane as a helical span at residues 252-271 (GNGVNVIKIAPETAMKFWAY). Over 272–294 (EQYKKLFTSESGKLGTAERFIAG) the chain is Mitochondrial intermembrane. The helical transmembrane segment at 295 to 308 (SLAGATAQTSIYPM) threads the bilayer. Over 309 to 344 (EVLKTRLAVGKTGQYSGMFDCAKKIMQKEGILAFYK) the chain is Mitochondrial matrix. Residues 345–364 (GYIPNILGIIPYAGIDLAIY) traverse the membrane as a helical segment. Topologically, residues 365–387 (ETLKNYWLQNYAKDSANPGVLVL) are mitochondrial intermembrane. Residues 388–405 (LGCGTVSSTCGQLASYPL) form a helical membrane-spanning segment. Topologically, residues 406 to 444 (ALIRTRMQAQASIEGAPQLNMGGLFRKIVAKEGFFGLYT) are mitochondrial matrix. The helical transmembrane segment at 445–464 (GIAPNFLKVLPAVSISYVVY) threads the bilayer. Topologically, residues 465–473 (EKMKIQLGI) are mitochondrial intermembrane.

The protein belongs to the mitochondrial carrier (TC 2.A.29) family. As to quaternary structure, monomer.

Its subcellular location is the mitochondrion inner membrane. The catalysed reaction is Mg(2+)(out) + phosphate(in) + ATP(out) = Mg(2+)(in) + phosphate(out) + ATP(in). It carries out the reaction ADP(out) + phosphate(in) + H(+)(out) = ADP(in) + phosphate(out) + H(+)(in). The enzyme catalyses AMP(out) + phosphate(in) = AMP(in) + phosphate(out). It catalyses the reaction phosphate(in) + ATP(out) + 2 H(+)(out) = phosphate(out) + ATP(in) + 2 H(+)(in). The catalysed reaction is dADP(in) + ADP(out) = dADP(out) + ADP(in). It carries out the reaction Mg(2+)(in) + ADP(out) + ATP(in) + H(+)(out) = Mg(2+)(out) + ADP(in) + ATP(out) + H(+)(in). The enzyme catalyses ADP(out) + diphosphate(in) = ADP(in) + diphosphate(out). It catalyses the reaction dAMP(in) + ADP(out) + H(+)(out) = dAMP(out) + ADP(in) + H(+)(in). The catalysed reaction is 3'-AMP(in) + ADP(out) + H(+)(out) = 3'-AMP(out) + ADP(in) + H(+)(in). It carries out the reaction dAMP(out) + phosphate(in) = dAMP(in) + phosphate(out). The enzyme catalyses 3'-AMP(out) + phosphate(in) = 3'-AMP(in) + phosphate(out). It catalyses the reaction dADP(out) + phosphate(in) + H(+)(out) = dADP(in) + phosphate(out) + H(+)(in). Its activity is regulated as follows. Activated by an increase in cytosolic calcium levels that induce a conformational change of the N-terminal regulatory domain, uncapping the channel and allowing transport. Inhibited by bathophenanthroline, mersalyl, p-hydroxymercuribenzoate, bromcresol purple and tannic acid. Its function is as follows. Electroneutral antiporter that mediates the transport of adenyl nucleotides through the inner mitochondrial membrane. Originally identified as an ATP-magnesium/inorganic phosphate antiporter, it also acts as a broad specificity adenyl nucleotide antiporter. By regulating the mitochondrial matrix adenyl nucleotide pool could adapt to changing cellular energetic demands and indirectly regulate adenyl nucleotide-dependent metabolic pathways. This is Mitochondrial adenyl nucleotide antiporter SLC25A24-A (slc25a24-a) from Xenopus laevis (African clawed frog).